An 86-amino-acid chain; its full sequence is Elicitor peptide 5 (86 aa).

A propeptide spanning residues 1-59 (MQQERDHKRDCCKLMPQTVKAFFKCLRFRRSSSSSSDMVKARARNEEKEEPSSIETSTR) is cleaved from the precursor. The tract at residues 31–86 (SSSSSSDMVKARARNEEKEEPSSIETSTRSLNVMRKGIRKQPVSSGKRGGVNDYDM) is disordered. A compositionally biased stretch (basic and acidic residues) spans 39–51 (VKARARNEEKEEP).

This sequence belongs to the brassicaceae elicitor peptide family.

Functionally, elicitor of plant defense. This is Elicitor peptide 5 (PEP5) from Arabidopsis thaliana (Mouse-ear cress).